Reading from the N-terminus, the 425-residue chain is tRNA(Ile)-lysidine synthase (425 aa).

Position 37 to 42 (37 to 42) interacts with ATP; it reads SGGKDS.

It belongs to the tRNA(Ile)-lysidine synthase family.

It is found in the cytoplasm. The catalysed reaction is cytidine(34) in tRNA(Ile2) + L-lysine + ATP = lysidine(34) in tRNA(Ile2) + AMP + diphosphate + H(+). Functionally, ligates lysine onto the cytidine present at position 34 of the AUA codon-specific tRNA(Ile) that contains the anticodon CAU, in an ATP-dependent manner. Cytidine is converted to lysidine, thus changing the amino acid specificity of the tRNA from methionine to isoleucine. This Leptospira borgpetersenii serovar Hardjo-bovis (strain JB197) protein is tRNA(Ile)-lysidine synthase.